Consider the following 256-residue polypeptide: Transmembrane protein 74B (256 aa).

The tract at residues 1-111 (MPPAQGYEFA…LSLHSEEGPA (111 aa)) is disordered. Residues 80–96 (RLGSSPSPPGGVSSLPR) are compositionally biased toward low complexity. Basic and acidic residues predominate over residues 97–108 (SQRDDLSLHSEE). Transmembrane regions (helical) follow at residues 123-143 (FVSA…AYAI) and 177-197 (IIAG…LLMV).

It belongs to the TMEM74 family.

It is found in the membrane. The sequence is that of Transmembrane protein 74B (TMEM74B) from Homo sapiens (Human).